We begin with the raw amino-acid sequence, 153 residues long: Proline-rich membrane anchor 1 (153 aa).

Positions 1–35 (MLLRDLVPRHGCCWPSLLLHCALHPLWGLVQVTHA) are cleaved as a signal peptide. The Extracellular segment spans residues 36 to 92 (EPQKSCSKVTDSCQHICQCRPPPPLPPPPPPPPPPRLLSAPAPNSTSCPAEDSWWSG). A PRAD domain is found at 56–70 (PPPPLPPPPPPPPPP). Residues 59–71 (PLPPPPPPPPPPR) are compositionally biased toward pro residues. Residues 59 to 79 (PLPPPPPPPPPPRLLSAPAPN) form a disordered region. N-linked (GlcNAc...) asparagine glycosylation is present at N79. A helical membrane pass occupies residues 93–113 (LVIIVAVVCASLVFLTVLVII). At 114–153 (CYKAIKRKPLRKDENGTSVAEYPMSSSQSHKGVDVNAAVV) the chain is on the cytoplasmic side. Residues 129–153 (GTSVAEYPMSSSQSHKGVDVNAAVV) form a disordered region.

As to quaternary structure, interacts with ACHE, probably through disulfide bonds. Predominantly expressed in the central nervous system, including in the brain. Also expressed in muscle, heart and kidney. Isoform 1 may be predominant in the cortex and striatum, while isoform 2 is more abundant in the cerebellum.

The protein resides in the cell membrane. It localises to the cell junction. The protein localises to the synapse. In terms of biological role, required to anchor acetylcholinesterase (ACHE) to the basal lamina of the neuromuscular junction and to the membrane of neuronal synapses in brain. Also able to organize ACHE into tetramers. The protein is Proline-rich membrane anchor 1 (Prima1) of Mus musculus (Mouse).